Reading from the N-terminus, the 389-residue chain is Exodeoxyribonuclease 7 large subunit (389 aa).

Belongs to the XseA family. Heterooligomer composed of large and small subunits.

The protein resides in the cytoplasm. It carries out the reaction Exonucleolytic cleavage in either 5'- to 3'- or 3'- to 5'-direction to yield nucleoside 5'-phosphates.. Bidirectionally degrades single-stranded DNA into large acid-insoluble oligonucleotides, which are then degraded further into small acid-soluble oligonucleotides. The protein is Exodeoxyribonuclease 7 large subunit of Pseudothermotoga lettingae (strain ATCC BAA-301 / DSM 14385 / NBRC 107922 / TMO) (Thermotoga lettingae).